The primary structure comprises 955 residues: Translation initiation factor IF-2 (955 aa).

Residues A49–I352 form a disordered region. The span at P77 to A88 shows a compositional bias: low complexity. Pro residues-rich tracts occupy residues P95 to R121, R149 to G159, R188 to P202, and P209 to G223. The segment covering G225–A235 has biased composition (gly residues). The span at P238 to G264 shows a compositional bias: pro residues. Gly residues predominate over residues S273 to G322. A compositionally biased stretch (basic residues) spans S326–R335. The tr-type G domain occupies P448–D620. A G1 region spans residues G457 to T464. G457–T464 is a GTP binding site. The segment at G482–H486 is G2. Positions D507 to G510 are G3. GTP contacts are provided by residues D507–H511 and N561–D564. Residues N561–D564 are G4. The interval S597–K599 is G5.

It belongs to the TRAFAC class translation factor GTPase superfamily. Classic translation factor GTPase family. IF-2 subfamily.

The protein localises to the cytoplasm. One of the essential components for the initiation of protein synthesis. Protects formylmethionyl-tRNA from spontaneous hydrolysis and promotes its binding to the 30S ribosomal subunits. Also involved in the hydrolysis of GTP during the formation of the 70S ribosomal complex. This is Translation initiation factor IF-2 from Thermobifida fusca (strain YX).